The chain runs to 87 residues: Large ribosomal subunit protein bL27 (87 aa).

The disordered stretch occupies residues 1–24 (MATKKAGGSSRNGRDSAGRRLGVK).

This sequence belongs to the bacterial ribosomal protein bL27 family.

This Rickettsia massiliae (strain Mtu5) protein is Large ribosomal subunit protein bL27.